The following is a 214-amino-acid chain: Adenylate kinase (214 aa).

Position 10-15 (10-15 (GAGKGT)) interacts with ATP. The tract at residues 30 to 59 (STGDMLRAAIKAGTELGKQAKTLMDAGQLV) is NMP. Residues T31, R36, 57-59 (QLV), 85-88 (GFPR), and Q92 contribute to the AMP site. The LID stretch occupies residues 122-159 (GRRVHPASGRSYHVVYNPPKVEGKDDVTGEDLIIRADD). ATP-binding positions include R123 and 132–133 (SY). 2 residues coordinate AMP: R156 and R167. Q200 lines the ATP pocket.

This sequence belongs to the adenylate kinase family. Monomer.

Its subcellular location is the cytoplasm. The enzyme catalyses AMP + ATP = 2 ADP. Its pathway is purine metabolism; AMP biosynthesis via salvage pathway; AMP from ADP: step 1/1. Catalyzes the reversible transfer of the terminal phosphate group between ATP and AMP. Plays an important role in cellular energy homeostasis and in adenine nucleotide metabolism. In Actinobacillus succinogenes (strain ATCC 55618 / DSM 22257 / CCUG 43843 / 130Z), this protein is Adenylate kinase.